The sequence spans 438 residues: UDP-N-acetylmuramoylalanine--D-glutamate ligase (438 aa).

112–118 (GSNGKST) contacts ATP.

It belongs to the MurCDEF family.

It localises to the cytoplasm. The enzyme catalyses UDP-N-acetyl-alpha-D-muramoyl-L-alanine + D-glutamate + ATP = UDP-N-acetyl-alpha-D-muramoyl-L-alanyl-D-glutamate + ADP + phosphate + H(+). It functions in the pathway cell wall biogenesis; peptidoglycan biosynthesis. Functionally, cell wall formation. Catalyzes the addition of glutamate to the nucleotide precursor UDP-N-acetylmuramoyl-L-alanine (UMA). The protein is UDP-N-acetylmuramoylalanine--D-glutamate ligase of Salmonella choleraesuis (strain SC-B67).